Consider the following 200-residue polypeptide: WUSCHEL-related homeobox 9 (200 aa).

A DNA-binding region (homeobox; WUS-type) is located at residues 10–74 (VKCGRWNPTA…NHKARERHHH (65 aa)). A compositionally biased stretch (basic residues) spans 70–80 (ERHHHKKRRRG). The segment at 70–118 (ERHHHKKRRRGASSPDSGSNDDDGRAAAHEGDADLVLQPPESKREARSY) is disordered. Basic and acidic residues predominate over residues 91–101 (DDGRAAAHEGD).

It belongs to the WUS homeobox family. As to expression, specifically expressed in the central cells of the quiescent center (QC) of the root.

The protein resides in the nucleus. Functionally, transcription factor which may be involved in the specification and maintenance of the stem cells (QC cells) in the root apical meristem (RAM). The sequence is that of WUSCHEL-related homeobox 9 (WOX9) from Oryza sativa subsp. japonica (Rice).